A 484-amino-acid chain; its full sequence is MSLSRAAIVDQLKEIVGADRVITDETVLKKNSIDRFRKFPDIHGIYTLPIPAAVVKLGSTEQVSRVLNFMNAHKINGVPRTGASATEGGLETVVENSVVLDGSAMNQIINIDIENMQATAQCGVPLEVLENALREKGYTTGHSPQSKPLAQMGGLVATRSIGQFSTLYGAIEDMVVGLEAVLADGTVTRIKNVPRRAAGPDIRHIIIGNEGALCYITEVTVKIFKFTPENNLFYGYILEDMKTGFNILREIMVEGYRPSIARLYDAEDGTQHFTHFADGKCVLIFMAEGNPRIAKVTGEGIAEIVARYPQCQRVDSKLIETWFNNLNWGPDKVAAERVQILKTGNMGFTTEVSGCWSCIHEIYESVINRIRTEFPHADDITMLGGHSSHSYQNGTNMYFVYDYNVVDCKPEEEIDKYHNPLNKIICEETIRLGGSMVHHHGIGKHRVHWSKLEHGSAWALLEGLKKQFDPNGIMNTGTIYPIEK.

Positions 47-226 (TLPIPAAVVK…TEVTVKIFKF (180 aa)) constitute an FAD-binding PCMH-type domain.

The protein belongs to the FAD-binding oxidoreductase/transferase type 4 family.

This is an uncharacterized protein from Escherichia coli (strain K12).